We begin with the raw amino-acid sequence, 572 residues long: Alpha-1D adrenergic receptor (572 aa).

The interval 1-77 (MTFRDLLSVS…SAGEPGSAGA (77 aa)) is disordered. Residues 1–95 (MTFRDLLSVS…AVGGLVVSAQ (95 aa)) are Extracellular-facing. Composition is skewed to gly residues over residues 23–33 (SSAGGGGGSAG) and 42–61 (AVGG…GAGS). N-linked (GlcNAc...) asparagine glycosylation is found at asparagine 65 and asparagine 82. Residues 96-121 (GVGVGVFLAAFILMAVAGNLLVILSV) traverse the membrane as a helical segment. Residues 122–133 (ACNRHLQTVTNY) are Cytoplasmic-facing. The chain crosses the membrane as a helical span at residues 134 to 159 (FIVNLAVADLLLSATVLPFSATMEVL). The Extracellular portion of the chain corresponds to 160–169 (GFWAFGRAFC). A helical transmembrane segment spans residues 170–192 (DVWAAVDVLCCTASILSLCTISV). The Cytoplasmic segment spans residues 193–213 (DRYVGVRHSLKYPAIMTERKA). A helical transmembrane segment spans residues 214 to 238 (AAILALLWVVALVVSVGPLLGWKEP). Residues 239–251 (VPPDERFCGITEE) are Extracellular-facing. The chain crosses the membrane as a helical span at residues 252 to 275 (AGYAVFSSVCSFYLPMAVIVVMYC). Topologically, residues 276–348 (RVYVVARSTT…KFSREKKAAK (73 aa)) are cytoplasmic. A helical transmembrane segment spans residues 349–373 (TLAIVVGVFVLCWFPFFFVLPLGSL). Residues 374 to 380 (FPQLKPS) are Extracellular-facing. The helical transmembrane segment at 381–405 (EGVFKVIFWLGYFNSCVNPLIYPCS) threads the bilayer. Residues 406–572 (SREFKRAFLR…DYSNLRETDI (167 aa)) are Cytoplasmic-facing. The S-palmitoyl cysteine moiety is linked to residue cysteine 419. Residues 444–488 (GLRQDCAPSSGDAPPGAPLALTALPDPDPEPPGTPEMQAPVASRR) are disordered. Residues 450-468 (APSSGDAPPGAPLALTALP) show a composition bias toward low complexity.

This sequence belongs to the G-protein coupled receptor 1 family. Adrenergic receptor subfamily. ADRA1D sub-subfamily. Interacts with FLNA (via filamin repeat 21); increases PKA-mediated phosphorylation of FLNA. Post-translationally, palmitoylated. Palmitoylation by ZDHHC21 may increase the expression of the receptor and regulate downstream signaling.

The protein localises to the cell membrane. In terms of biological role, this alpha-adrenergic receptor mediates its effect through the influx of extracellular calcium. The sequence is that of Alpha-1D adrenergic receptor (ADRA1D) from Homo sapiens (Human).